The following is a 72-amino-acid chain: UPF0270 protein YheU (72 aa).

It belongs to the UPF0270 family.

The sequence is that of UPF0270 protein YheU from Salmonella dublin (strain CT_02021853).